Reading from the N-terminus, the 307-residue chain is 17-beta-hydroxysteroid dehydrogenase type 3 (307 aa).

The helical transmembrane segment at Ile-6 to Leu-26 threads the bilayer. Gly-47 to Ile-76 is an NADP(+) binding site. Ser-187 contributes to the substrate binding site. The Proton acceptor role is filled by Tyr-200.

Belongs to the short-chain dehydrogenases/reductases (SDR) family. In terms of tissue distribution, expression shows strong sexual dimorphism. In female, highly expressed in ovaries, and at lower levels in skin muscle, eyes and liver. In males, strongly expressed in liver and at lower levels in testis, spleen, kidney, intestine and muscle.

It localises to the endoplasmic reticulum. The protein localises to the membrane. The catalysed reaction is a 17beta-hydroxy steroid + NADP(+) = a 17-oxo steroid + NADPH + H(+). It carries out the reaction testosterone + NADP(+) = androst-4-ene-3,17-dione + NADPH + H(+). The enzyme catalyses 3beta-hydroxyandrost-5-en-17-one + NADPH + H(+) = androst-5-en-3beta,17beta-diol + NADP(+). It catalyses the reaction 3beta-hydroxy-5alpha-androstan-17-one + NADPH + H(+) = 5alpha-androstane-3beta,17beta-diol + NADP(+). The catalysed reaction is androst-4-ene-3,11,17-trione + NADPH + H(+) = 17beta-hydroxyandrost-4-ene-3,11-dione + NADP(+). It carries out the reaction 11beta-hydroxyandrost-4-ene-3,17-dione + NADPH + H(+) = 11beta,17beta-dihydroxyandrost-4-ene-3-one + NADP(+). It participates in hormone biosynthesis; testosterone biosynthesis. The protein operates within steroid metabolism. Its function is as follows. Catalyzes the conversion of 17-oxosteroids to 17beta-hydroxysteroids in the presence of NADPH. Favors the reduction of androstenedione to testosterone. Testosterone is the key androgen driving male development and function. Among further tested androgens epiandrosterone and dehydroepiandrosterone are accepted as substrates and reduced at C-17. Can also reduce 11-ketoandrostenedione as well as 11beta-hydroxyandrostenedione at C-17 to the respective testosterone forms. Cannot use androsterone and androstanedione as substrates. The chain is 17-beta-hydroxysteroid dehydrogenase type 3 (hsd17b3) from Danio rerio (Zebrafish).